The chain runs to 875 residues: Neurotrypsin (875 aa).

The signal sequence occupies residues 1 to 20 (MTLARFVLALVLGALPEVVG). The N-linked (GlcNAc...) asparagine glycan is linked to asparagine 26. Positions 30-87 (HHRHRHSPPPGPQYPYYLPTHQRPPRTRPPPPLPRFPRPPRALPAQRPHALQAGHTPR) are disordered. A compositionally biased stretch (pro residues) spans 56–71 (TRPPPPLPRFPRPPRA). The 73-residue stretch at 93 to 165 (CPAGELWVSV…GKVDWGYCDC (73 aa)) folds into the Kringle domain. 20 disulfides stabilise this stretch: cysteine 93–cysteine 165, cysteine 109–cysteine 149, cysteine 138–cysteine 163, cysteine 195–cysteine 259, cysteine 208–cysteine 269, cysteine 239–cysteine 249, cysteine 305–cysteine 369, cysteine 318–cysteine 379, cysteine 349–cysteine 359, cysteine 412–cysteine 475, cysteine 425–cysteine 485, cysteine 455–cysteine 465, cysteine 525–cysteine 589, cysteine 538–cysteine 599, cysteine 569–cysteine 579, cysteine 619–cysteine 750, cysteine 661–cysteine 677, cysteine 765–cysteine 831, cysteine 794–cysteine 808, and cysteine 821–cysteine 850. SRCR domains follow at residues 170–271 (VRLR…TCSF), 280–381 (IRLV…SCTP), 387–487 (IRLA…ACYP), and 500–601 (VRLM…ICDY). The interval 619-630 (CGLRLLHRRQKR) is zymogen activation region. The region spanning 631–874 (IIGGKNSLRG…FVPWIKSVTK (244 aa)) is the Peptidase S1 domain. The active-site Charge relay system is the histidine 676. Residue asparagine 683 is glycosylated (N-linked (GlcNAc...) asparagine). Aspartate 726 serves as the catalytic Charge relay system. Catalysis depends on serine 825, which acts as the Charge relay system.

Belongs to the peptidase S1 family.

It localises to the secreted. Functionally, plays a role in neuronal plasticity and the proteolytic action may subserve structural reorganizations associated with learning and memory operations. The sequence is that of Neurotrypsin (PRSS12) from Macaca mulatta (Rhesus macaque).